A 141-amino-acid chain; its full sequence is HTH-type transcriptional repressor NsrR (141 aa).

The HTH rrf2-type domain occupies 2–129; it reads QLTSFTDYAL…DDCTIEELLS (128 aa). The H-T-H motif DNA-binding region spans 28 to 51; the sequence is ITEVTDLFGVSRNHMVKVINRLGQ. Residues Cys-91, Cys-96, and Cys-102 each contribute to the [2Fe-2S] cluster site.

It depends on [2Fe-2S] cluster as a cofactor.

In terms of biological role, nitric oxide-sensitive repressor of genes involved in protecting the cell against nitrosative stress. May require iron for activity. The chain is HTH-type transcriptional repressor NsrR from Vibrio campbellii (strain ATCC BAA-1116).